A 318-amino-acid chain; its full sequence is NADH-ubiquinone oxidoreductase chain 1 (318 aa).

Transmembrane regions (helical) follow at residues 2 to 22, 76 to 96, 98 to 118, 140 to 160, 171 to 191, 217 to 237, 253 to 273, and 294 to 314; these read FMVN…FLTL, TLAL…HPLI, FNLG…SILW, ISYE…SGSF, HSWL…STLA, AGSF…MNAL, ELYT…FLWI, and LPLT…TSGI.

This sequence belongs to the complex I subunit 1 family. In terms of assembly, core subunit of respiratory chain NADH dehydrogenase (Complex I) which is composed of 45 different subunits.

It localises to the mitochondrion inner membrane. The enzyme catalyses a ubiquinone + NADH + 5 H(+)(in) = a ubiquinol + NAD(+) + 4 H(+)(out). Its function is as follows. Core subunit of the mitochondrial membrane respiratory chain NADH dehydrogenase (Complex I) which catalyzes electron transfer from NADH through the respiratory chain, using ubiquinone as an electron acceptor. Essential for the catalytic activity and assembly of complex I. This chain is NADH-ubiquinone oxidoreductase chain 1 (MT-ND1), found in Ateles paniscus (Black spider monkey).